We begin with the raw amino-acid sequence, 446 residues long: uncharacterized protein (446 aa).

Helical transmembrane passes span 20-40 (LIGV…IAIV), 42-62 (SGFS…FVFE), 95-115 (WVYW…ISLF), 127-147 (VFAS…LSVF), 160-180 (AAIF…LSGG), 205-225 (LIYA…AVHL), 237-257 (LMLA…LLLV), 284-304 (IFNG…LFAV), 331-351 (WPAL…SLVL), 355-375 (IYEH…LFIL), 388-408 (GKTQ…GTLF), and 414-434 (PGFF…MIYQ).

This sequence belongs to the amino acid-polyamine-organocation (APC) superfamily.

The protein resides in the cell membrane. This is an uncharacterized protein from Bacillus subtilis (strain 168).